Here is a 415-residue protein sequence, read N- to C-terminus: MSFYEELKWRNLIKDSSDEKELKNLLDCKKIKFYCGFDPTSDSLTVGHLVQLTMMSLLEKQGHSPFILVGGATGLIGDPKETEERKLLSLETSLQNAKSLETQLKKILFQKKITFLNNYEWFSQLDIITFLRKYGKLFNINYMLNKQTVAKRLSSGISFTEFTYMILQSLDFHHLYKNYGVQLQLGGSDQWGNITSGLELIRKLETTSHAFGLSTPLLLNANGTKFGKSEQDVLWLDPQKTSPYKIYQYFLNLADEEVVNCLKQLTLIPKEEILELEKATLQTPQKRLAQKALANNIVNLIYSQKVLQECHKTNEVLFLNKKKESFQEADFTLLNKTLFSYETSLVSIPLSEALVKTQLTTSKREAREFIQRGSIQIFNEKIKNPDYLIDKKNTLFNKYVLLKKGKKNNSLIILN.

Tyr-34 is an L-tyrosine binding site. Positions 39–48 match the 'HIGH' region motif; that stretch reads PTSDSLTVGH. The L-tyrosine site is built by Tyr-164 and Gln-168. Residues 225–229 carry the 'KMSKS' region motif; the sequence is KFGKS. Position 228 (Lys-228) interacts with ATP. Residues 348-414 enclose the S4 RNA-binding domain; sequence IPLSEALVKT…GKKNNSLIIL (67 aa).

This sequence belongs to the class-I aminoacyl-tRNA synthetase family. TyrS type 1 subfamily. In terms of assembly, homodimer.

Its subcellular location is the cytoplasm. It catalyses the reaction tRNA(Tyr) + L-tyrosine + ATP = L-tyrosyl-tRNA(Tyr) + AMP + diphosphate + H(+). In terms of biological role, catalyzes the attachment of tyrosine to tRNA(Tyr) in a two-step reaction: tyrosine is first activated by ATP to form Tyr-AMP and then transferred to the acceptor end of tRNA(Tyr). In Phytoplasma australiense, this protein is Tyrosine--tRNA ligase.